The following is a 141-amino-acid chain: Large ribosomal subunit protein uL11c (141 aa).

It belongs to the universal ribosomal protein uL11 family. In terms of assembly, part of the ribosomal stalk of the 50S ribosomal subunit. Interacts with L10 and the large rRNA to form the base of the stalk. L10 forms an elongated spine to which L12 dimers bind in a sequential fashion forming a multimeric L10(L12)X complex.

It is found in the plastid. Its subcellular location is the chloroplast. In terms of biological role, forms part of the ribosomal stalk which helps the ribosome interact with GTP-bound translation factors. The sequence is that of Large ribosomal subunit protein uL11c from Trieres chinensis (Marine centric diatom).